The sequence spans 58 residues: Parvalbumin beta 3 (58 aa).

Ala-1 bears the N-acetylalanine mark. One can recognise an EF-hand domain in the interval 24–58; that stretch reads FNYKTFFKFFAIIDQDHSGFIEEEELKALSDAETK. 6 residues coordinate Ca(2+): Asp-37, Asp-39, Ser-41, Phe-43, Glu-45, and Glu-48.

It belongs to the parvalbumin family.

In terms of biological role, in muscle, parvalbumin is thought to be involved in relaxation after contraction. It binds two calcium ions. The chain is Parvalbumin beta 3 from Merluccius senegalensis (Senegalese hake).